We begin with the raw amino-acid sequence, 158 residues long: Transcription elongation factor GreA (158 aa).

Belongs to the GreA/GreB family.

In terms of biological role, necessary for efficient RNA polymerase transcription elongation past template-encoded arresting sites. The arresting sites in DNA have the property of trapping a certain fraction of elongating RNA polymerases that pass through, resulting in locked ternary complexes. Cleavage of the nascent transcript by cleavage factors such as GreA or GreB allows the resumption of elongation from the new 3'terminus. GreA releases sequences of 2 to 3 nucleotides. The polypeptide is Transcription elongation factor GreA (Wigglesworthia glossinidia brevipalpis).